We begin with the raw amino-acid sequence, 241 residues long: tRNA (guanine-N(1)-)-methyltransferase (241 aa).

S-adenosyl-L-methionine contacts are provided by residues glycine 108 and 127–132 (LGDYVL).

The protein belongs to the RNA methyltransferase TrmD family. As to quaternary structure, homodimer.

The protein localises to the cytoplasm. It catalyses the reaction guanosine(37) in tRNA + S-adenosyl-L-methionine = N(1)-methylguanosine(37) in tRNA + S-adenosyl-L-homocysteine + H(+). Specifically methylates guanosine-37 in various tRNAs. This is tRNA (guanine-N(1)-)-methyltransferase from Streptococcus suis (strain 98HAH33).